Consider the following 212-residue polypeptide: MNLLIMGLPGAGKGTQAAKIVDHFNVAHISTGDMFRAAIANQTEMGVLAKSYIDKGELVPDEVTNGIVKERLSQNDIKETGFLLDGYPRTIEQAHALDQTLTELDLALDGVINIEVDPNSLLERLSGRIIHRETGETFHKVFNPPADYKEEDYYQREDDKPETVKRRLDVNIAQGQPIIDHYRRKGLVHDIQGNQDINDVFSAIEKVLTNLK.

10–15 serves as a coordination point for ATP; the sequence is GAGKGT. The interval 30 to 59 is NMP; sequence STGDMFRAAIANQTEMGVLAKSYIDKGELV. AMP-binding positions include Thr31, Arg36, 57–59, 86–89, and Gln93; these read ELV and GYPR. Residues 127 to 159 are LID; the sequence is GRIIHRETGETFHKVFNPPADYKEEDYYQREDD. ATP is bound by residues Arg128 and 137–138; that span reads TF. 2 residues coordinate AMP: Arg156 and Arg167. Gln195 is a binding site for ATP.

It belongs to the adenylate kinase family. As to quaternary structure, monomer.

It localises to the cytoplasm. It carries out the reaction AMP + ATP = 2 ADP. The protein operates within purine metabolism; AMP biosynthesis via salvage pathway; AMP from ADP: step 1/1. In terms of biological role, catalyzes the reversible transfer of the terminal phosphate group between ATP and AMP. Plays an important role in cellular energy homeostasis and in adenine nucleotide metabolism. This chain is Adenylate kinase, found in Streptococcus sanguinis (strain SK36).